A 160-amino-acid polypeptide reads, in one-letter code: Putative NrdI-like protein (160 aa).

The protein belongs to the NrdI family.

The chain is Putative NrdI-like protein from Streptococcus pyogenes serotype M3 (strain ATCC BAA-595 / MGAS315).